The sequence spans 104 residues: Large ribosomal subunit protein uL24 (104 aa).

The protein belongs to the universal ribosomal protein uL24 family. As to quaternary structure, part of the 50S ribosomal subunit.

Its function is as follows. One of two assembly initiator proteins, it binds directly to the 5'-end of the 23S rRNA, where it nucleates assembly of the 50S subunit. One of the proteins that surrounds the polypeptide exit tunnel on the outside of the subunit. The protein is Large ribosomal subunit protein uL24 of Nitrobacter winogradskyi (strain ATCC 25391 / DSM 10237 / CIP 104748 / NCIMB 11846 / Nb-255).